Consider the following 355-residue polypeptide: Probable nitronate monooxygenase (355 aa).

FMN contacts are provided by residues N71, Q175, G180, G218, and 237-240 (QMGT).

Belongs to the nitronate monooxygenase family. NMO class I subfamily. The cofactor is FMN.

The enzyme catalyses 3 propionate 3-nitronate + 3 O2 + H2O = 3 3-oxopropanoate + 2 nitrate + nitrite + H2O2 + 3 H(+). Functionally, nitronate monooxygenase that uses molecular oxygen to catalyze the oxidative denitrification of alkyl nitronates. Acts on propionate 3-nitronate (P3N), the presumed physiological substrate. Probably functions in the detoxification of P3N, a metabolic poison produced by plants and fungi as a defense mechanism. The chain is Probable nitronate monooxygenase from Staphylococcus aureus (strain USA300).